The sequence spans 676 residues: PAS domain-containing protein cky-1 (676 aa).

A compositionally biased stretch (low complexity) spans 45–72 (SALNNNSINVPNNNTMGMSSAGSSNGSN). The disordered stretch occupies residues 45–89 (SALNNNSINVPNNNTMGMSSAGSSNGSNLVNGQQRSTRGASKQRR). The span at 73-84 (LVNGQQRSTRGA) shows a compositional bias: polar residues. The tract at residues 76 to 89 (GQQRSTRGASKQRR) is basic motif. Positions 76-129 (GQQRSTRGASKQRRDQINVEIQKLRDLLPLSDLIKDRLFQLQVMSLGCIFIRKH) constitute a bHLH domain. Residues 90-129 (DQINVEIQKLRDLLPLSDLIKDRLFQLQVMSLGCIFIRKH) are helix-loop-helix motif. Positions 165-215 (MLMVTRSGKILHVSDNASEYLGHSVEEIMCQGDSIYDLVDGRDHGAVQAEL) constitute a PAS domain. Residues 436–462 (FSCQDSPPPSEEQQPSSPQTPPFTEQP) are disordered.

In terms of assembly, heterodimer; efficient DNA binding requires dimerization with another bHLH protein. Forms a heterodimer with ARNT homolog aha-1; binds DNA as heterodimer.

It localises to the nucleus. Transcription factor. Efficient DNA binding requires dimerization with another bHLH protein, such as ARNT homolog aha-1. Regulates transcription of target genes, probably acting in complex with aha-1. The polypeptide is PAS domain-containing protein cky-1 (Caenorhabditis elegans).